The chain runs to 830 residues: uncharacterized protein (830 aa).

Over residues 1-12 (MEKASKNKESGV) the composition is skewed to basic and acidic residues. The interval 1 to 61 (MEKASKNKES…SIKSKNKKKT (61 aa)) is disordered. The segment covering 15–25 (ANNSFLQNFGV) has biased composition (polar residues). The 185-residue stretch at 249–433 (TVSKSSASGG…YSLVKFLHIN (185 aa)) folds into the Helicase ATP-binding domain. An ATP-binding site is contributed by 262-269 (DDMGLGKT). The DEAH box signature appears at 384–387 (DEAH). A Helicase C-terminal domain is found at 662 to 816 (EEDDTVRGLR…KSVFTSKKLT (155 aa)). Phosphoserine is present on S712.

It belongs to the SNF2/RAD54 helicase family.

It is found in the nucleus. This is an uncharacterized protein from Schizosaccharomyces pombe (strain 972 / ATCC 24843) (Fission yeast).